The sequence spans 387 residues: Formate-dependent phosphoribosylglycinamide formyltransferase (387 aa).

Residues glutamate 21 to leucine 22 and glutamate 81 each bind N(1)-(5-phospho-beta-D-ribosyl)glycinamide. Residues arginine 113, lysine 154, serine 159–glutamine 164, glutamate 193–valine 196, and glutamate 201 contribute to the ATP site. The region spanning valine 118 to leucine 306 is the ATP-grasp domain. Mg(2+) is bound by residues glutamate 265 and glutamate 277. Residues aspartate 284, lysine 352, and arginine 359–arginine 360 contribute to the N(1)-(5-phospho-beta-D-ribosyl)glycinamide site.

Belongs to the PurK/PurT family. In terms of assembly, homodimer.

It carries out the reaction N(1)-(5-phospho-beta-D-ribosyl)glycinamide + formate + ATP = N(2)-formyl-N(1)-(5-phospho-beta-D-ribosyl)glycinamide + ADP + phosphate + H(+). It functions in the pathway purine metabolism; IMP biosynthesis via de novo pathway; N(2)-formyl-N(1)-(5-phospho-D-ribosyl)glycinamide from N(1)-(5-phospho-D-ribosyl)glycinamide (formate route): step 1/1. Involved in the de novo purine biosynthesis. Catalyzes the transfer of formate to 5-phospho-ribosyl-glycinamide (GAR), producing 5-phospho-ribosyl-N-formylglycinamide (FGAR). Formate is provided by PurU via hydrolysis of 10-formyl-tetrahydrofolate. The protein is Formate-dependent phosphoribosylglycinamide formyltransferase of Sulfurovum sp. (strain NBC37-1).